A 330-amino-acid chain; its full sequence is Putative 1-aminocyclopropane-1-carboxylate deaminase (330 aa).

Residue Lys-54 is modified to N6-(pyridoxal phosphate)lysine.

The protein belongs to the ACC deaminase/D-cysteine desulfhydrase family. It depends on pyridoxal 5'-phosphate as a cofactor.

The enzyme catalyses 1-aminocyclopropane-1-carboxylate + H2O = 2-oxobutanoate + NH4(+). The polypeptide is Putative 1-aminocyclopropane-1-carboxylate deaminase (Pyrococcus abyssi (strain GE5 / Orsay)).